The primary structure comprises 116 residues: Large ribosomal subunit protein uL24 (116 aa).

It belongs to the universal ribosomal protein uL24 family. In terms of assembly, part of the 50S ribosomal subunit.

One of two assembly initiator proteins, it binds directly to the 5'-end of the 23S rRNA, where it nucleates assembly of the 50S subunit. Functionally, located at the polypeptide exit tunnel on the outside of the subunit. This Methanosarcina barkeri (strain Fusaro / DSM 804) protein is Large ribosomal subunit protein uL24.